The sequence spans 69 residues: DNA gyrase inhibitor YacG (69 aa).

Zn(2+) contacts are provided by Cys-12, Cys-15, Cys-31, and Cys-35. The disordered stretch occupies residues 49–69 (RVPVEPKPDEGETPDQAERPQ).

The protein belongs to the DNA gyrase inhibitor YacG family. As to quaternary structure, interacts with GyrB. It depends on Zn(2+) as a cofactor.

In terms of biological role, inhibits all the catalytic activities of DNA gyrase by preventing its interaction with DNA. Acts by binding directly to the C-terminal domain of GyrB, which probably disrupts DNA binding by the gyrase. This Thiobacillus denitrificans (strain ATCC 25259 / T1) protein is DNA gyrase inhibitor YacG.